Consider the following 140-residue polypeptide: General stress protein 26 (140 aa).

This chain is General stress protein 26 (ydaG), found in Bacillus subtilis (strain 168).